Consider the following 273-residue polypeptide: Dermonecrotic toxin LvSicTox-alphaIC1ai (273 aa).

Residue H5 is part of the active site. Residues E25 and D27 each contribute to the Mg(2+) site. H41 acts as the Nucleophile in catalysis. 2 cysteine pairs are disulfide-bonded: C45–C51 and C47–C190. Residue D85 coordinates Mg(2+).

Belongs to the arthropod phospholipase D family. Class II subfamily. Mg(2+) is required as a cofactor. In terms of tissue distribution, expressed by the venom gland.

Its subcellular location is the secreted. It catalyses the reaction an N-(acyl)-sphingosylphosphocholine = an N-(acyl)-sphingosyl-1,3-cyclic phosphate + choline. It carries out the reaction an N-(acyl)-sphingosylphosphoethanolamine = an N-(acyl)-sphingosyl-1,3-cyclic phosphate + ethanolamine. The catalysed reaction is a 1-acyl-sn-glycero-3-phosphocholine = a 1-acyl-sn-glycero-2,3-cyclic phosphate + choline. The enzyme catalyses a 1-acyl-sn-glycero-3-phosphoethanolamine = a 1-acyl-sn-glycero-2,3-cyclic phosphate + ethanolamine. In terms of biological role, dermonecrotic toxins cleave the phosphodiester linkage between the phosphate and headgroup of certain phospholipids (sphingolipid and lysolipid substrates), forming an alcohol (often choline) and a cyclic phosphate. This toxin acts on sphingomyelin (SM). It may also act on ceramide phosphoethanolamine (CPE), lysophosphatidylcholine (LPC) and lysophosphatidylethanolamine (LPE), but not on lysophosphatidylserine (LPS), and lysophosphatidylglycerol (LPG). It acts by transphosphatidylation, releasing exclusively cyclic phosphate products as second products. Induces dermonecrosis, hemolysis, increased vascular permeability, edema, inflammatory response, and platelet aggregation. This Loxosceles variegata (Recluse spider) protein is Dermonecrotic toxin LvSicTox-alphaIC1ai.